Here is a 130-residue protein sequence, read N- to C-terminus: Con-Ins M1 (130 aa).

The signal sequence occupies residues 1-21; it reads MTTSSYFLLVALGLLLYVCQS. 4 disulfide bridges follow: Cys29-Cys107, Cys41-Cys110, Cys53-Cys123, and Cys109-Cys114. Residue Pro34 is modified to 4-hydroxyproline; partial. Residues 59–92 constitute a propeptide, c peptide; it reads AHGGTNDARATTGRALSLSKRRGFLSMLKRRGKR. A 4-carboxyglutamate; partial modification is found at Glu118. Ser129 carries the serine amide modification.

It belongs to the insulin family. Heterodimer of A and B chains; disulfide-linked. In terms of tissue distribution, expressed by the venom gland.

It localises to the secreted. In terms of biological role, this venom insulin facilitates prey capture by rapidly inducing hypoglycemic shock. Intraperitoneal injection of this peptide into zebrafish lowers blood glucose with the same potency than human insulin. In vivo, when applied to water, this peptide reduces overall locomotor activity of zebrafish larvae, observed as a significant decrease in the percentage of time spent swimming and movement frequency. This chain is Con-Ins M1, found in Conus marmoreus (Marble cone).